Consider the following 326-residue polypeptide: Transcription factor bHLH143 (326 aa).

Residues 175 to 189 (SDDDDNDDWESDDEV) are compositionally biased toward acidic residues. Disordered regions lie at residues 175–194 (SDDD…STGH) and 234–275 (RDSS…EQSR). Positions 255–271 (PESNISSKQETGSGLSD) are enriched in polar residues. A bHLH domain is found at 263 to 312 (QETGSGLSDEQSRKDKIHTALRILESVVPGAKGKEALLLLDEAIDYLKLL).

Homodimer.

It is found in the nucleus. This is Transcription factor bHLH143 (BHLH143) from Arabidopsis thaliana (Mouse-ear cress).